Consider the following 290-residue polypeptide: D-tagatose-1,6-bisphosphate aldolase subunit KbaY (290 aa).

Asp-82 serves as the catalytic Proton donor. Zn(2+)-binding residues include His-83 and His-180. Residue Gly-181 coordinates dihydroxyacetone phosphate. Position 208 (His-208) interacts with Zn(2+). Residues 209-211 (GAS) and 230-233 (NVAT) each bind dihydroxyacetone phosphate.

Belongs to the class II fructose-bisphosphate aldolase family. TagBP aldolase KbaY subfamily. In terms of assembly, homotetramer. Forms a complex with KbaZ. The cofactor is Zn(2+).

The enzyme catalyses D-tagatofuranose 1,6-bisphosphate = D-glyceraldehyde 3-phosphate + dihydroxyacetone phosphate. It functions in the pathway carbohydrate metabolism; D-tagatose 6-phosphate degradation; D-glyceraldehyde 3-phosphate and glycerone phosphate from D-tagatose 6-phosphate: step 2/2. In terms of biological role, catalytic subunit of the tagatose-1,6-bisphosphate aldolase KbaYZ, which catalyzes the reversible aldol condensation of dihydroxyacetone phosphate (DHAP or glycerone-phosphate) with glyceraldehyde 3-phosphate (G3P) to produce tagatose 1,6-bisphosphate (TBP). Requires KbaZ subunit for full activity and stability. The polypeptide is D-tagatose-1,6-bisphosphate aldolase subunit KbaY (Salmonella arizonae (strain ATCC BAA-731 / CDC346-86 / RSK2980)).